A 320-amino-acid polypeptide reads, in one-letter code: Aspartate carbamoyltransferase catalytic subunit (320 aa).

Carbamoyl phosphate contacts are provided by Arg68 and Thr69. Residue Lys96 coordinates L-aspartate. Carbamoyl phosphate is bound by residues Arg118, His148, and Gln151. Residues Arg181 and Arg236 each coordinate L-aspartate. Residues Gly277 and Pro278 each contribute to the carbamoyl phosphate site.

The protein belongs to the aspartate/ornithine carbamoyltransferase superfamily. ATCase family. As to quaternary structure, heterododecamer (2C3:3R2) of six catalytic PyrB chains organized as two trimers (C3), and six regulatory PyrI chains organized as three dimers (R2).

It carries out the reaction carbamoyl phosphate + L-aspartate = N-carbamoyl-L-aspartate + phosphate + H(+). Its pathway is pyrimidine metabolism; UMP biosynthesis via de novo pathway; (S)-dihydroorotate from bicarbonate: step 2/3. Catalyzes the condensation of carbamoyl phosphate and aspartate to form carbamoyl aspartate and inorganic phosphate, the committed step in the de novo pyrimidine nucleotide biosynthesis pathway. This chain is Aspartate carbamoyltransferase catalytic subunit, found in Acidovorax ebreus (strain TPSY) (Diaphorobacter sp. (strain TPSY)).